The sequence spans 447 residues: SNF1-related protein kinase regulatory subunit gamma-1-like (447 aa).

A2 bears the N-acetylalanine mark. S35 carries the post-translational modification Phosphoserine. 4 consecutive CBS domains span residues 54-120, 214-275, 292-350, and 374-433; these read QVPG…SAEL, SFRW…GRDW, MSPN…PEVF, and LAIP…PNYF.

The protein belongs to the 5'-AMP-activated protein kinase gamma subunit family. As to quaternary structure, subunit of a probable heterotrimeric complex consisting of an alpha catalytic (KIN10 or KIN11) subunit, and a beta (KINB) and a gamma (KING or SNF4) non-catalytic regulatory subunits.

Regulatory subunit of the probable trimeric SNF1-related protein kinase (SnRK) complex, which may play a role in a signal transduction cascade regulating gene expression and carbohydrate metabolism in higher plants. The sequence is that of SNF1-related protein kinase regulatory subunit gamma-1-like (CBSCBS2) from Arabidopsis thaliana (Mouse-ear cress).